Consider the following 288-residue polypeptide: Stomatin (288 aa).

The interval methionine 1–serine 22 is disordered. Residues methionine 1–lysine 25 lie on the Cytoplasmic side of the membrane. Serine 10 carries the post-translational modification Phosphoserine; by PKA. Residue serine 18 is modified to Phosphoserine. The stretch at glycine 26–isoleucine 54 is an intramembrane region. Cysteine 30 carries S-palmitoyl cysteine lipidation. Residues lysine 55–glycine 288 lie on the Cytoplasmic side of the membrane. Cysteine 87 carries the S-palmitoyl cysteine; partial lipid modification. Phosphoserine is present on residues serine 161 and serine 244. The interval serine 265–isoleucine 273 is required for homooligomerization. The required for lipid raft association stretch occupies residues isoleucine 267–phenylalanine 269. The interval isoleucine 273–leucine 287 is interaction with LANCL1.

Belongs to the band 7/mec-2 family. As to quaternary structure, homodimer and higher order homooligomer. The homodimer is banana-shaped. Interacts with ASIC1, ASIC2 and ASIC3. Interacts with LANCL1. Interacts with SLC2A1. Interacts with SLC4A1; this interaction positively regulates SLC4A1 activity. Identified in large complexes with SLC40A1, SLC14A1, SLC29A1 and AQP1. Interacts with STOML1; may redistribute STOM from the plasma membrane to late endosomes. Detected in erythrocytes (at protein level). Widely expressed.

It localises to the cell membrane. The protein localises to the cytoplasm. Its subcellular location is the cytoskeleton. The protein resides in the membrane raft. It is found in the melanosome. It localises to the cytoplasmic vesicle. Regulates ion channel activity and transmembrane ion transport. Regulates ASIC2 and ASIC3 channel activity. The protein is Stomatin of Homo sapiens (Human).